The sequence spans 447 residues: Argininosuccinate synthase (447 aa).

ATP contacts are provided by residues 17 to 25 (AFSGGLDTS) and Ala-43. Tyr-99 serves as a coordination point for L-citrulline. ATP-binding residues include Gly-129 and Thr-131. Thr-131, Asn-135, and Asp-136 together coordinate L-aspartate. Asn-135 contacts L-citrulline. Asp-136 contacts ATP. Residues Arg-139 and Ser-192 each coordinate L-citrulline. ATP is bound at residue Asp-194. Positions 201, 203, and 280 each coordinate L-citrulline.

It belongs to the argininosuccinate synthase family. Type 2 subfamily. In terms of assembly, homotetramer.

The protein localises to the cytoplasm. It carries out the reaction L-citrulline + L-aspartate + ATP = 2-(N(omega)-L-arginino)succinate + AMP + diphosphate + H(+). It functions in the pathway amino-acid biosynthesis; L-arginine biosynthesis; L-arginine from L-ornithine and carbamoyl phosphate: step 2/3. The sequence is that of Argininosuccinate synthase from Klebsiella pneumoniae (strain 342).